The primary structure comprises 251 residues: MRRKIVAGNWKLHGSRAFATELVAKVAAHMPLEGVEVVILPPLPYLGDLIEDFEAHHLSFGAQDVSSNEKGAYTGEVSASMLVDVGAGYGLVGHSERRQYHQESSELVARKFAAALHAGLIPVLCVGESLEQREAGQTEAILRAQLDPVLALVGSAGFAGAVLAYEPIWAIGTGRTATPEQAQAVHAFLRGEVAKADARIADSLPILYGGSVKPDNAGELFAQPDVDGGLVGGASLVAEDFLAIARAAAAC.

9-11 (NWK) contributes to the substrate binding site. Catalysis depends on H94, which acts as the Electrophile. E166 acts as the Proton acceptor in catalysis. Substrate-binding positions include G172, S211, and 232–233 (GG).

This sequence belongs to the triosephosphate isomerase family. In terms of assembly, homodimer.

The protein localises to the cytoplasm. It catalyses the reaction D-glyceraldehyde 3-phosphate = dihydroxyacetone phosphate. It functions in the pathway carbohydrate biosynthesis; gluconeogenesis. The protein operates within carbohydrate degradation; glycolysis; D-glyceraldehyde 3-phosphate from glycerone phosphate: step 1/1. Involved in the gluconeogenesis. Catalyzes stereospecifically the conversion of dihydroxyacetone phosphate (DHAP) to D-glyceraldehyde-3-phosphate (G3P). The protein is Triosephosphate isomerase of Xanthomonas axonopodis pv. citri (strain 306).